We begin with the raw amino-acid sequence, 258 residues long: Aspartate/glutamate leucyltransferase (258 aa).

Belongs to the R-transferase family. Bpt subfamily.

Its subcellular location is the cytoplasm. It carries out the reaction N-terminal L-glutamyl-[protein] + L-leucyl-tRNA(Leu) = N-terminal L-leucyl-L-glutamyl-[protein] + tRNA(Leu) + H(+). The enzyme catalyses N-terminal L-aspartyl-[protein] + L-leucyl-tRNA(Leu) = N-terminal L-leucyl-L-aspartyl-[protein] + tRNA(Leu) + H(+). Its function is as follows. Functions in the N-end rule pathway of protein degradation where it conjugates Leu from its aminoacyl-tRNA to the N-termini of proteins containing an N-terminal aspartate or glutamate. This Bradyrhizobium sp. (strain BTAi1 / ATCC BAA-1182) protein is Aspartate/glutamate leucyltransferase.